Here is a 524-residue protein sequence, read N- to C-terminus: Solute carrier family 35 member F5 (524 aa).

The interval 1-22 (MVPPRHHPGAGRPGALSSSPPF) is disordered. The span at 13 to 22 (PGALSSSPPF) shows a compositional bias: low complexity. 2 helical membrane-spanning segments follow: residues 69-89 (MALG…SSEL) and 101-121 (FFST…FIVW). At serine 207 the chain carries Phosphoserine. Transmembrane regions (helical) follow at residues 244-264 (ISFF…EALS), 269-289 (AIVN…AAMF), 297-317 (FTLS…LVNL), 328-348 (TIGS…IVMI), 362-382 (MFFG…FFLL), 396-416 (VVLM…EFLW), 421-441 (FLTS…LSII), and 453-473 (WLFF…TLLC). In terms of domain architecture, EamA spans 253-317 (FLANFSYQEA…SIGGVVLVNL (65 aa)).

The protein belongs to the SLC35F solute transporter family.

The protein localises to the membrane. Its function is as follows. Putative solute transporter. The sequence is that of Solute carrier family 35 member F5 (SLC35F5) from Bos taurus (Bovine).